Consider the following 282-residue polypeptide: Pantothenate synthetase (282 aa).

32–39 (MGALHEGH) contributes to the ATP binding site. The Proton donor role is filled by His39. Position 63 (Gln63) interacts with (R)-pantoate. Gln63 serves as a coordination point for beta-alanine. 149-152 (GEKD) is an ATP binding site. A (R)-pantoate-binding site is contributed by Gln155. Residues Val178 and 186–189 (LSSR) each bind ATP.

Belongs to the pantothenate synthetase family. As to quaternary structure, homodimer.

The protein resides in the cytoplasm. It carries out the reaction (R)-pantoate + beta-alanine + ATP = (R)-pantothenate + AMP + diphosphate + H(+). It functions in the pathway cofactor biosynthesis; (R)-pantothenate biosynthesis; (R)-pantothenate from (R)-pantoate and beta-alanine: step 1/1. Functionally, catalyzes the condensation of pantoate with beta-alanine in an ATP-dependent reaction via a pantoyl-adenylate intermediate. This is Pantothenate synthetase from Paracoccus denitrificans (strain Pd 1222).